A 196-amino-acid chain; its full sequence is Protein GrpE (196 aa).

The disordered stretch occupies residues 1–40; it reads MSSKEQKTPEGQAPEEIIMDQHEEVEAVEPNDSAEQVDPR.

Belongs to the GrpE family. In terms of assembly, homodimer.

The protein resides in the cytoplasm. Its function is as follows. Participates actively in the response to hyperosmotic and heat shock by preventing the aggregation of stress-denatured proteins, in association with DnaK and GrpE. It is the nucleotide exchange factor for DnaK and may function as a thermosensor. Unfolded proteins bind initially to DnaJ; upon interaction with the DnaJ-bound protein, DnaK hydrolyzes its bound ATP, resulting in the formation of a stable complex. GrpE releases ADP from DnaK; ATP binding to DnaK triggers the release of the substrate protein, thus completing the reaction cycle. Several rounds of ATP-dependent interactions between DnaJ, DnaK and GrpE are required for fully efficient folding. The polypeptide is Protein GrpE (Salmonella gallinarum (strain 287/91 / NCTC 13346)).